Reading from the N-terminus, the 198-residue chain is Cyclin-dependent kinase inhibitor 1B (198 aa).

Positions Met-1–Pro-11 are enriched in polar residues. The tract at residues Met-1 to Gly-34 is disordered. Position 10 is a phosphoserine; by UHMK1 (Ser-10). The segment covering Glu-14 to Lys-25 has biased composition (basic and acidic residues). Positions Asp-51–Pro-91 are interaction with CDK2. Tyr-74 bears the Phosphotyrosine; by SRC mark. The disordered stretch occupies residues Pro-85–Thr-198. Residue Tyr-88 is modified to Phosphotyrosine; by ABL, LYN, SRC and JAK2. Tyr-89 is subject to Phosphotyrosine. The span at Glu-126 to Pro-137 shows a compositional bias: basic and acidic residues. The short motif at Lys-153 to Arg-169 is the Nuclear localization signal element. Thr-157 bears the Phosphothreonine; by CaMK1, PKB/AKT1 and PIM1 mark. The residue at position 170 (Thr-170) is a Phosphothreonine. Residues Ser-175 to Gln-186 are compositionally biased toward polar residues. Thr-187 is subject to Phosphothreonine; by PKB/AKT1, CDK1 and CDK2. A Phosphothreonine; by CaMK1, PKB/AKT1, RPS6KA1, RPS6KA3 and PIM1 modification is found at Thr-198.

Belongs to the CDI family. Forms a ternary complex composed of CCNE1, CDK2 and CDKN1B. Interacts directly with CCNE1; the interaction is inhibited by CDK2-dependent phosphorylation on Thr-187. Interacts with COPS5, subunit of the COP9 signalosome complex; the interaction leads to CDKN1B degradation. Interacts with NUP50; the interaction leads to nuclear import and degradation of phosphorylated CDKN1B. Interacts with CCND1 and SNX6. Interacts (Thr-198-phosphorylated form) with 14-3-3 proteins, binds strongly YWHAQ, weakly YWHAE and YWHAH, but not YWHAB nor YWHAZ; the interaction with YWHAQ results in translocation to the cytoplasm. Interacts with AKT1 and LYN; the interactions lead to cytoplasmic mislocation, phosphorylation of CDKN1B and inhibition of cell cycle arrest. Forms a ternary complex with CCNA2 and CDK2; CDKN1B inhibits the kinase activity of CDK2 through conformational rearrangements. Interacts (unphosphorylated form) with CDK2. Forms a complex with CDK2 and SPDYA, but does not directly interact with SPDYA. Forms a ternary complex composed of cyclin D, CDK4 and CDKN1B. Interacts (phosphorylated on Tyr-88 and Tyr-89) with CDK4; the interaction is required for cyclin D and CDK4 complex assembly, induces nuclear translocation and activates the CDK4 kinase activity. Interacts with GRB2. Interacts with PIM1. Identified in a complex with SKP1, SKP2 and CKS1B. Interacts with UHMK1; the interaction leads to cytoplasmic mislocation, phosphorylation of CDKN1B and inhibition of cell cycle arrest. Also interacts with CDK1. Dephosphorylated on Thr-187 by PPM1H, leading to CDKN1B stability. Interacts with HSPA8; the interaction may be associated with susceptibility to ubiquitination. In terms of processing, phosphorylated; phosphorylation occurs on serine, threonine and tyrosine residues. Phosphorylation on Ser-10 is the major site of phosphorylation in resting cells, takes place at the G(0)-G(1) phase and leads to protein stability. Phosphorylation on other sites is greatly enhanced by mitogens, growth factors, cMYC and in certain cancer cell lines. The phosphorylated form found in the cytoplasm is inactivate. Phosphorylation on Thr-198 is required for interaction with 14-3-3 proteins. Phosphorylation on Thr-187, by CDK1 and CDK2 leads to protein ubiquitination and proteasomal degradation. Tyrosine phosphorylation promotes this process. Phosphorylation by PKB/AKT1 can be suppressed by LY294002, an inhibitor of the catalytic subunit of PI3K. Phosphorylation on Tyr-88 and Tyr-89 has no effect on binding CDK2, but is required for binding CDK4. Dephosphorylated on tyrosine residues by G-CSF. Post-translationally, ubiquitinated; in the cytoplasm by the KPC complex (composed of RNF123/KPC1 and UBAC1/KPC2) and, in the nucleus, by SCF(SKP2). The latter requires prior phosphorylation on Thr-187. Ubiquitinated; by a TRIM21-containing SCF(SKP2)-like complex; leads to its degradation. Subject to degradation in the lysosome. Interaction with SNX6 promotes lysosomal degradation. Expressed in kidney (at protein level). Expressed in all tissues tested. Highest levels in skeletal muscle, lowest in liver and kidney.

The protein resides in the nucleus. Its subcellular location is the cytoplasm. It is found in the endosome. Its function is as follows. Important regulator of cell cycle progression. Inhibits the kinase activity of CDK2 bound to cyclin A, but has little inhibitory activity on CDK2 bound to SPDYA. Involved in G1 arrest. Potent inhibitor of cyclin E- and cyclin A-CDK2 complexes. Forms a complex with cyclin type D-CDK4 complexes and is involved in the assembly, stability, and modulation of CCND1-CDK4 complex activation. Acts either as an inhibitor or an activator of cyclin type D-CDK4 complexes depending on its phosphorylation state and/or stoichometry. The chain is Cyclin-dependent kinase inhibitor 1B from Homo sapiens (Human).